Reading from the N-terminus, the 880-residue chain is Translation initiation factor IF-2 (880 aa).

The segment at 259–281 is disordered; that stretch reads KNREEARAVGRSSKSQSKRKSST. The tr-type G domain maps to 379 to 548; it reads SRAPVVTIMG…LLQAEVLELK (170 aa). Positions 388 to 395 are G1; the sequence is GHVDHGKT. Residue 388-395 coordinates GTP; sequence GHVDHGKT. Residues 413-417 are G2; the sequence is GITQH. Residues 434-437 are G3; the sequence is DTPG. GTP contacts are provided by residues 434–438 and 488–491; these read DTPGH and NKID. The segment at 488–491 is G4; that stretch reads NKID. The segment at 524-526 is G5; sequence SAK.

Belongs to the TRAFAC class translation factor GTPase superfamily. Classic translation factor GTPase family. IF-2 subfamily.

The protein localises to the cytoplasm. In terms of biological role, one of the essential components for the initiation of protein synthesis. Protects formylmethionyl-tRNA from spontaneous hydrolysis and promotes its binding to the 30S ribosomal subunits. Also involved in the hydrolysis of GTP during the formation of the 70S ribosomal complex. The polypeptide is Translation initiation factor IF-2 (Baumannia cicadellinicola subsp. Homalodisca coagulata).